A 201-amino-acid polypeptide reads, in one-letter code: MARYTGPLTKKSRRLGTDLVGNDKSFERRPYPPGVHGRGRTKDSEYSLQLREKQKARYAYGVLEKQFRRYYEEADRAQGKTGDVLLQILESRLDNVVYRAGLAATRRQARQMVSHGHFLVNGKKVNIPSYRVSTHDIIDVREKSKDLPPIVIARETFETRDVPAWLEVRPNKGRILVHQLPTRDQIVIDVNEQAIVELYSK.

The disordered stretch occupies residues 1 to 45 (MARYTGPLTKKSRRLGTDLVGNDKSFERRPYPPGVHGRGRTKDSE). The S4 RNA-binding domain occupies 91–157 (SRLDNVVYRA…PPIVIARETF (67 aa)).

The protein belongs to the universal ribosomal protein uS4 family. As to quaternary structure, part of the 30S ribosomal subunit. Contacts protein S5. The interaction surface between S4 and S5 is involved in control of translational fidelity.

Its function is as follows. One of the primary rRNA binding proteins, it binds directly to 16S rRNA where it nucleates assembly of the body of the 30S subunit. With S5 and S12 plays an important role in translational accuracy. The sequence is that of Small ribosomal subunit protein uS4 from Cutibacterium acnes (strain DSM 16379 / KPA171202) (Propionibacterium acnes).